Here is a 294-residue protein sequence, read N- to C-terminus: Very long chain fatty acid elongase 5 (294 aa).

A run of 7 helical transmembrane segments spans residues 26 to 46 (WLLL…LLIV), 64 to 84 (ILVV…YELV), 112 to 132 (VLWW…FFIL), 141 to 161 (FLHI…MNWV), 172 to 192 (FNSF…IPAI), 207 to 227 (LVQF…PCGF), and 231 to 251 (WLYF…NFYI). The interval 261–294 (AKKDPRHNGIKSVNGHSNGASHTNAVKNRKARTD) is disordered. Positions 274–286 (NGHSNGASHTNAV) are enriched in polar residues.

It belongs to the ELO family. ELOVL5 subfamily. Expression is highest in intestine, followed by brain and heart, and lowest in gill. Also expressed in liver, spleen and muscle.

It localises to the endoplasmic reticulum membrane. The protein localises to the cell projection. It is found in the dendrite. It catalyses the reaction a very-long-chain acyl-CoA + malonyl-CoA + H(+) = a very-long-chain 3-oxoacyl-CoA + CO2 + CoA. The catalysed reaction is (6Z,9Z,12Z)-octadecatrienoyl-CoA + malonyl-CoA + H(+) = (8Z,11Z,14Z)-3-oxoeicosatrienoyl-CoA + CO2 + CoA. It carries out the reaction (9Z,12Z,15Z)-octadecatrienoyl-CoA + malonyl-CoA + H(+) = (11Z,14Z,17Z)-3-oxoeicosatrienoyl-CoA + CO2 + CoA. The enzyme catalyses (9Z)-hexadecenoyl-CoA + malonyl-CoA + H(+) = 3-oxo-(11Z)-octadecenoyl-CoA + CO2 + CoA. It catalyses the reaction (9Z)-octadecenoyl-CoA + malonyl-CoA + H(+) = 3-oxo-(11Z)-eicosenoyl-CoA + CO2 + CoA. The catalysed reaction is (11Z)-octadecenoyl-CoA + malonyl-CoA + H(+) = 3-oxo-(13Z)-eicosenoyl-CoA + CO2 + CoA. It carries out the reaction (9Z,12Z)-octadecadienoyl-CoA + malonyl-CoA + H(+) = (11Z,14Z)-3-oxoicosa-11,14-dienoyl-CoA + CO2 + CoA. The enzyme catalyses (6Z,9Z,12Z,15Z)-octadecatetraenoyl-CoA + malonyl-CoA + H(+) = (8Z,11Z,14Z,17Z)-3-oxoicosatetraenoyl-CoA + CO2 + CoA. It catalyses the reaction (5Z,8Z,11Z,14Z)-eicosatetraenoyl-CoA + malonyl-CoA + H(+) = (7Z,10Z,13Z,16Z)-3-oxodocosatetraenoyl-CoA + CO2 + CoA. The catalysed reaction is (5Z,8Z,11Z,14Z,17Z)-eicosapentaenoyl-CoA + malonyl-CoA + H(+) = 3-oxo-(7Z,10Z,13Z,16Z,19Z)-docosapentaenoyl-CoA + CO2 + CoA. It functions in the pathway lipid metabolism; polyunsaturated fatty acid biosynthesis. Its function is as follows. Catalyzes the first and rate-limiting reaction of the four reactions that constitute the long-chain fatty acids elongation cycle. This endoplasmic reticulum-bound enzymatic process allows the addition of 2 carbons to the chain of long- and very long-chain fatty acids (VLCFAs) per cycle. Condensing enzyme that acts specifically toward polyunsaturated acyl-CoA with the higher activity toward C18:3(n-6) acyl-CoA. May participate in the production of monounsaturated and of polyunsaturated VLCFAs of different chain lengths that are involved in multiple biological processes as precursors of membrane lipids and lipid mediators. In conditions where the essential linoleic and alpha linoleic fatty acids are lacking it is also involved in the synthesis of Mead acid from oleic acid. In Tachysurus fulvidraco (Yellow catfish), this protein is Very long chain fatty acid elongase 5.